Consider the following 616-residue polypeptide: tRNA uridine 5-carboxymethylaminomethyl modification enzyme MnmG (616 aa).

Residues 10–15, Val122, and Ser177 contribute to the FAD site; that span reads GAGHAG. 271 to 285 is an NAD(+) binding site; the sequence is GPRYCPSIEDKVVRF. Residue Gln368 participates in FAD binding.

Belongs to the MnmG family. In terms of assembly, homodimer. Heterotetramer of two MnmE and two MnmG subunits. FAD serves as cofactor.

It localises to the cytoplasm. Functionally, NAD-binding protein involved in the addition of a carboxymethylaminomethyl (cmnm) group at the wobble position (U34) of certain tRNAs, forming tRNA-cmnm(5)s(2)U34. The protein is tRNA uridine 5-carboxymethylaminomethyl modification enzyme MnmG of Malacoplasma penetrans (strain HF-2) (Mycoplasma penetrans).